The chain runs to 285 residues: MGDLGFLSKLLDQVQSHSTVIGKIWMTVLFLFRIMVLGAGAESVWGDEQSDFTCNTQQPGCENVCYDWTFPISHIRFWVLQIIFVSTPTLIYLGHAMHIIQQETKLRARLSSPGGSRLCKQPKYTNEQGKVKIKGNLLGSYLTQLVFKIIIEAAFIVGQYYLYGFIMVPMFPCSKKPCPFTVECYMSRPTEKTIFIIFMLVVACVSLLLNVIEVFYLICTRVRCGSRAHSHKITSAENPASLSSPRWPTVEDSLKQNKMNMELETSQSIGGSLDGAKEEKRLLSH.

Residues 2–19 lie on the Cytoplasmic side of the membrane; it reads GDLGFLSKLLDQVQSHST. A helical transmembrane segment spans residues 20–40; it reads VIGKIWMTVLFLFRIMVLGAG. The Extracellular portion of the chain corresponds to 41 to 76; the sequence is AESVWGDEQSDFTCNTQQPGCENVCYDWTFPISHIR. The chain crosses the membrane as a helical span at residues 77-99; that stretch reads FWVLQIIFVSTPTLIYLGHAMHI. Residues 100-148 are Cytoplasmic-facing; it reads IQQETKLRARLSSPGGSRLCKQPKYTNEQGKVKIKGNLLGSYLTQLVFK. Residues 149-171 form a helical membrane-spanning segment; the sequence is IIIEAAFIVGQYYLYGFIMVPMF. Over 172–194 the chain is Extracellular; the sequence is PCSKKPCPFTVECYMSRPTEKTI. A helical membrane pass occupies residues 195–217; the sequence is FIIFMLVVACVSLLLNVIEVFYL. Residues 218 to 285 lie on the Cytoplasmic side of the membrane; it reads ICTRVRCGSR…AKEEKRLLSH (68 aa). The interval 264–285 is disordered; that stretch reads ETSQSIGGSLDGAKEEKRLLSH. Basic and acidic residues predominate over residues 275–285; it reads GAKEEKRLLSH.

It belongs to the connexin family. Beta-type (group I) subfamily. As to quaternary structure, a connexon is composed of a hexamer of connexins.

It is found in the cell membrane. It localises to the cell junction. The protein resides in the gap junction. Functionally, one gap junction consists of a cluster of closely packed pairs of transmembrane channels, the connexons, through which materials of low MW diffuse from one cell to a neighboring cell. May be involved in ovarian follicular maturation. This Micropogonias undulatus (Atlantic croaker) protein is Gap junction Cx32.2 protein.